Reading from the N-terminus, the 157-residue chain is Ribosomal RNA large subunit methyltransferase H (157 aa).

S-adenosyl-L-methionine is bound by residues Leu-73, Gly-105, and 124-129 (MSKMTF).

This sequence belongs to the RNA methyltransferase RlmH family. Homodimer.

Its subcellular location is the cytoplasm. The catalysed reaction is pseudouridine(1915) in 23S rRNA + S-adenosyl-L-methionine = N(3)-methylpseudouridine(1915) in 23S rRNA + S-adenosyl-L-homocysteine + H(+). In terms of biological role, specifically methylates the pseudouridine at position 1915 (m3Psi1915) in 23S rRNA. The sequence is that of Ribosomal RNA large subunit methyltransferase H from Bacteroides fragilis (strain ATCC 25285 / DSM 2151 / CCUG 4856 / JCM 11019 / LMG 10263 / NCTC 9343 / Onslow / VPI 2553 / EN-2).